The sequence spans 666 residues: Endogenous retrovirus group K member 6 Gag polyprotein (666 aa).

A lipid anchor (N-myristoyl glycine) is attached at glycine 2. The tract at residues 165–264 (GKGPELVGPS…APPSRQGSKL (100 aa)) is disordered. The segment covering 232-247 (GMPPAPQGRAPYPQPP) has biased composition (pro residues). CCHC-type zinc fingers lie at residues 544-561 (RKCY…NCPV) and 580-597 (DLCP…QCRS). The tract at residues 598–642 (KFDKNGQPLSGNEQRGQPQAPQQTGAFPIQPFVPQGFQGQQPPLS) is disordered. Residues 604-622 (QPLSGNEQRGQPQAPQQTG) are compositionally biased toward polar residues. The segment covering 624–640 (FPIQPFVPQGFQGQQPP) has biased composition (low complexity).

Belongs to the beta type-B retroviral Gag protein family. HERV class-II K(HML-2) gag subfamily. Myristoylation is essential for retroviral assembly. Alteration of the glycine residue leads to a block in the budding of particles and an accumulation of Gag inside the cell. Post-translationally, specific enzymatic cleavages may yield mature proteins.

It localises to the cell membrane. The products of the Gag polyproteins of infectious retroviruses perform highly complex orchestrated tasks during the assembly, budding, maturation, and infection stages of the viral replication cycle. During viral assembly, the proteins form membrane associations and self-associations that ultimately result in budding of an immature virion from the infected cell. Gag precursors also function during viral assembly to selectively bind and package two plus strands of genomic RNA. Endogenous Gag proteins may have kept, lost or modified their original function during evolution. In Homo sapiens (Human), this protein is Endogenous retrovirus group K member 6 Gag polyprotein (ERVK-6).